Here is a 251-residue protein sequence, read N- to C-terminus: tRNA-cytidine(32) 2-sulfurtransferase 1 (251 aa).

Positions 33-38 (SGGKDS) match the PP-loop motif motif. [4Fe-4S] cluster-binding residues include C108, C111, and C199.

It belongs to the TtcA family. As to quaternary structure, homodimer. Requires Mg(2+) as cofactor. The cofactor is [4Fe-4S] cluster.

The protein resides in the cytoplasm. The catalysed reaction is cytidine(32) in tRNA + S-sulfanyl-L-cysteinyl-[cysteine desulfurase] + AH2 + ATP = 2-thiocytidine(32) in tRNA + L-cysteinyl-[cysteine desulfurase] + A + AMP + diphosphate + H(+). It functions in the pathway tRNA modification. Catalyzes the ATP-dependent 2-thiolation of cytidine in position 32 of tRNA, to form 2-thiocytidine (s(2)C32). The sulfur atoms are provided by the cysteine/cysteine desulfurase (IscS) system. The sequence is that of tRNA-cytidine(32) 2-sulfurtransferase 1 from Francisella tularensis subsp. holarctica (strain FTNF002-00 / FTA).